The sequence spans 287 residues: Elongation factor Ts (287 aa).

The involved in Mg(2+) ion dislocation from EF-Tu stretch occupies residues 80–83; sequence TDFL.

Belongs to the EF-Ts family.

It is found in the cytoplasm. In terms of biological role, associates with the EF-Tu.GDP complex and induces the exchange of GDP to GTP. It remains bound to the aminoacyl-tRNA.EF-Tu.GTP complex up to the GTP hydrolysis stage on the ribosome. The polypeptide is Elongation factor Ts (Pseudomonas putida (strain ATCC 700007 / DSM 6899 / JCM 31910 / BCRC 17059 / LMG 24140 / F1)).